The sequence spans 1139 residues: Sterol regulatory element-binding protein 2 (1139 aa).

Residues 1–50 form a transcriptional activation (acidic) region; that stretch reads MDESSELGGLETMDTLTELGDELTLGDIDEMLQFVSNQVGEFPDLFSEQL. Residues 1–479 lie on the Cytoplasmic side of the membrane; sequence MDESSELGGL…VALGMVDRSR (479 aa). Disordered stretches follow at residues 48 to 104 and 119 to 143; these read EQLC…SPST and TPPR…SAQL. A compositionally biased stretch (low complexity) spans 61–77; it reads GSSSSSNSSSSSGSNSR. A compositionally biased stretch (polar residues) spans 90-104; the sequence is RSFSQVPLPTFSPST. Pro residues predominate over residues 119 to 138; that stretch reads TPPRATPVLQPRPQPQPQPQ. The tract at residues 235–489 is interaction with LMNA; the sequence is QQVPVLVQPQ…ILLCVLTFLG (255 aa). The bHLH domain maps to 328-378; sequence ERRTTHNIIEKRYRSSINDKIIELKDLVMGTDAKMHKSGVLRKAIDYIKYL. The leucine-zipper stretch occupies residues 378–399; it reads LQQVNHKLRQENMVLKLANQKN. Residue Lys-462 forms a Glycyl lysine isopeptide (Lys-Gly) (interchain with G-Cter in SUMO2) linkage. Residues 480-500 form a helical membrane-spanning segment; it reads ILLCVLTFLGLSFSPLTSLLQ. At 501-531 the chain is on the lumenal side; it reads WGGAHDTDQHPYSGSGRSVLSLESGSGGWFD. A helical transmembrane segment spans residues 532–552; that stretch reads WMMPTLLLWLVNGVIVLSVFV. Over 553–1139 the chain is Cytoplasmic; it reads KLLVHGEPVI…LGGGTAIAAS (587 aa). Position 1096 is a phosphoserine (Ser-1096).

This sequence belongs to the SREBP family. In terms of assembly, homodimer; efficient DNA binding of the soluble transcription factor fragment requires dimerization with another bHLH protein. Interacts with LMNA. As to quaternary structure, forms a tight complex with SCAP, the SCAP-SREBP complex, in the endoplasmic reticulum membrane and the Golgi apparatus. Interacts with PAQR3; the interaction anchors the SCAP-SREBP complex to the Golgi apparatus in low cholesterol conditions. Interacts (via C-terminal domain) with RNF139. Processed in the Golgi apparatus, releasing the protein from the membrane. At low cholesterol the SCAP-SREBP complex is recruited into COPII vesicles for export from the endoplasmic reticulum. In the Golgi, complex SREBPs are cleaved sequentially by site-1 (MBTPS1, S1P) and site-2 (MBTPS2, S2P) proteases. The first cleavage by site-1 protease occurs within the luminal loop, the second cleavage by site-2 protease occurs within the first transmembrane domain, releasing the transcription factor from the Golgi membrane. Apoptosis triggers cleavage by the cysteine proteases caspase-3 and caspase-7. Cleavage and activation is induced by mediated cholesterol efflux. Post-translationally, phosphorylated by AMPK, leading to suppress protein processing and nuclear translocation, and repress target gene expression. In terms of processing, SCAP-free SREBF2 is ubiquitinated by the BCR(ARMC5) complex, leading to its degradation. Ubiquitinated; the nuclear form has a rapid turnover and is rapidly ubiquitinated and degraded by the proteasome in the nucleus.

The protein localises to the endoplasmic reticulum membrane. It is found in the golgi apparatus membrane. Its subcellular location is the cytoplasmic vesicle. It localises to the COPII-coated vesicle membrane. The protein resides in the nucleus. With respect to regulation, activation by cleavage is down-regulated upon activation of SIRT3-dependent PRKAA1/AMPK-alpha signaling cascade which leads to inhibition of ATP-consuming lipogenesis to restore cellular energy balance. In terms of biological role, precursor of the transcription factor form (Processed sterol regulatory element-binding protein 2), which is embedded in the endoplasmic reticulum membrane. Low sterol concentrations promote processing of this form, releasing the transcription factor form that translocates into the nucleus and activates transcription of genes involved in cholesterol biosynthesis. Functionally, key transcription factor that regulates expression of genes involved in cholesterol biosynthesis. Binds to the sterol regulatory element 1 (SRE-1) (5'-ATCACCCCAC-3'). Has dual sequence specificity binding to both an E-box motif (5'-ATCACGTGA-3') and to SRE-1 (5'-ATCACCCCAC-3'). Regulates transcription of genes related to cholesterol synthesis pathway. In Cricetulus griseus (Chinese hamster), this protein is Sterol regulatory element-binding protein 2 (SREBF2).